A 120-amino-acid chain; its full sequence is Large ribosomal subunit protein bL20 (120 aa).

The protein belongs to the bacterial ribosomal protein bL20 family.

Functionally, binds directly to 23S ribosomal RNA and is necessary for the in vitro assembly process of the 50S ribosomal subunit. It is not involved in the protein synthesizing functions of that subunit. The protein is Large ribosomal subunit protein bL20 of Paracidovorax citrulli (strain AAC00-1) (Acidovorax citrulli).